The following is a 164-amino-acid chain: R-phycoerythrin alpha chain (164 aa).

(2R,3E)-phycoerythrobilin is bound by residues Asn47, Lys81, Cys82, Arg84, His88, Arg137, Cys139, and Arg142.

This sequence belongs to the phycobiliprotein family. As to quaternary structure, heterododecamer of 6 alpha and 6 beta chains. The basic functional unit of phycobiliproteins is a ring-shaped hexamer formed from two back-to-back trimers contacting via the alpha chain subunits. The trimers are composed of alpha/beta subunit heterodimers arranged around a three-fold axis of symmetry. The phycoerythrins also contain a gamma subunit which is located in the center of the hexamer. In terms of processing, contains two covalently linked phycoerythrobilin chromophores.

The protein resides in the plastid. Its subcellular location is the chloroplast thylakoid membrane. Functionally, light-harvesting photosynthetic tetrapyrrole chromophore-protein from the phycobiliprotein complex. This is R-phycoerythrin alpha chain (rpeA) from Agarophyton chilense (Red seaweed).